A 335-amino-acid polypeptide reads, in one-letter code: UPF0353 protein MMAR_2288 (335 aa).

A run of 2 helical transmembrane segments spans residues 18 to 38 and 67 to 87; these read WFFL…VLQL and IPAM…AGPT. The VWFA domain maps to 98–294; it reads VVMLVIDVSQ…AELNSVYASL (197 aa). Residues 309 to 329 form a helical membrane-spanning segment; it reads MGWLRLGALVLVAAALAALLI.

This sequence belongs to the UPF0353 family.

Its subcellular location is the cell membrane. This chain is UPF0353 protein MMAR_2288, found in Mycobacterium marinum (strain ATCC BAA-535 / M).